A 378-amino-acid chain; its full sequence is Queuine tRNA-ribosyltransferase (378 aa).

Catalysis depends on aspartate 90, which acts as the Proton acceptor. Residues 90–94 (DSGGY), aspartate 152, glutamine 194, and glycine 223 each bind substrate. Positions 254–260 (GVGKPED) are RNA binding. Catalysis depends on aspartate 273, which acts as the Nucleophile. The interval 278 to 282 (TRNAR) is RNA binding; important for wobble base 34 recognition. Positions 311, 313, 316, and 342 each coordinate Zn(2+).

It belongs to the queuine tRNA-ribosyltransferase family. Homodimer. Within each dimer, one monomer is responsible for RNA recognition and catalysis, while the other monomer binds to the replacement base PreQ1. Zn(2+) serves as cofactor.

It carries out the reaction 7-aminomethyl-7-carbaguanine + guanosine(34) in tRNA = 7-aminomethyl-7-carbaguanosine(34) in tRNA + guanine. The protein operates within tRNA modification; tRNA-queuosine biosynthesis. In terms of biological role, catalyzes the base-exchange of a guanine (G) residue with the queuine precursor 7-aminomethyl-7-deazaguanine (PreQ1) at position 34 (anticodon wobble position) in tRNAs with GU(N) anticodons (tRNA-Asp, -Asn, -His and -Tyr). Catalysis occurs through a double-displacement mechanism. The nucleophile active site attacks the C1' of nucleotide 34 to detach the guanine base from the RNA, forming a covalent enzyme-RNA intermediate. The proton acceptor active site deprotonates the incoming PreQ1, allowing a nucleophilic attack on the C1' of the ribose to form the product. After dissociation, two additional enzymatic reactions on the tRNA convert PreQ1 to queuine (Q), resulting in the hypermodified nucleoside queuosine (7-(((4,5-cis-dihydroxy-2-cyclopenten-1-yl)amino)methyl)-7-deazaguanosine). This chain is Queuine tRNA-ribosyltransferase, found in Aquifex aeolicus (strain VF5).